The following is a 116-amino-acid chain: Large ribosomal subunit protein uL18 (116 aa).

This sequence belongs to the universal ribosomal protein uL18 family. In terms of assembly, part of the 50S ribosomal subunit; part of the 5S rRNA/L5/L18/L25 subcomplex. Contacts the 5S and 23S rRNAs.

Its function is as follows. This is one of the proteins that bind and probably mediate the attachment of the 5S RNA into the large ribosomal subunit, where it forms part of the central protuberance. This Shewanella halifaxensis (strain HAW-EB4) protein is Large ribosomal subunit protein uL18.